We begin with the raw amino-acid sequence, 495 residues long: uncharacterized protein (495 aa).

The next 12 membrane-spanning stretches (helical) occupy residues 43–63 (IIIS…MPSI), 75–95 (TLVV…PLIF), 106–126 (PLNI…ALSV), 128–148 (LAMF…GLGI), 168–188 (IYFL…GFIA), 196–216 (WEFW…VVFL), 284–304 (PIMI…YLLF), 323–343 (GLTY…LLPL), 366–386 (PMAF…GWTV), 390–410 (VFWF…VMTF), 426–446 (ASAM…FPLF), and 461–481 (SLLA…YMFG).

It belongs to the major facilitator superfamily. CAR1 family.

It localises to the membrane. This is an uncharacterized protein from Schizosaccharomyces pombe (strain 972 / ATCC 24843) (Fission yeast).